The chain runs to 840 residues: Protein translocase subunit SecA (840 aa).

ATP is bound by residues Gln85, 103–107 (GEGKT), and Asp492. Positions 787 to 821 (QRERVAKETGASHGGDSQEIKKKPVKKEPKVGRND) are disordered. Basic and acidic residues predominate over residues 802 to 819 (DSQEIKKKPVKKEPKVGR). Positions 823, 825, 834, and 835 each coordinate Zn(2+).

This sequence belongs to the SecA family. As to quaternary structure, monomer and homodimer. Part of the essential Sec protein translocation apparatus which comprises SecA, SecYEG and auxiliary proteins SecDF. Other proteins may also be involved. Zn(2+) is required as a cofactor.

Its subcellular location is the cell membrane. It is found in the cytoplasm. It carries out the reaction ATP + H2O + cellular proteinSide 1 = ADP + phosphate + cellular proteinSide 2.. In terms of biological role, part of the Sec protein translocase complex. Interacts with the SecYEG preprotein conducting channel. Has a central role in coupling the hydrolysis of ATP to the transfer of proteins into and across the cell membrane, serving as an ATP-driven molecular motor driving the stepwise translocation of polypeptide chains across the membrane. The sequence is that of Protein translocase subunit SecA from Clostridium perfringens (strain 13 / Type A).